Consider the following 160-residue polypeptide: DNA topoisomerase small subunit (160 aa).

Part of the DNA topoisomerase complex made of gp39, gp52 and gp60. Requires Mg(2+) as cofactor.

The enzyme catalyses ATP-dependent breakage, passage and rejoining of double-stranded DNA.. In terms of biological role, small subunit of the DNA topoisomerase that untwists superhelical DNA. Controls topological states of double-stranded DNA by transient breakage and subsequent rejoining of DNA strands. In Enterobacteria phage T4 (Bacteriophage T4), this protein is DNA topoisomerase small subunit (60).